Reading from the N-terminus, the 254-residue chain is Putative ankyrin-containing lipoprotein Lxx09580 (254 aa).

The signal sequence occupies residues 1–22; the sequence is MTEIRYVRLLTLVLASSVLLAG. A lipid anchor (N-palmitoyl cysteine) is attached at C23. The S-diacylglycerol cysteine moiety is linked to residue C23. ANK repeat units follow at residues 56–85, 89–118, 122–151, 155–184, and 188–222; these read AATASLHAAARSGDAEAVRSALAAGAAIED, GGRTPLVEAAKGNHVEAARALIEAGADVNA, IQDSAYLYAGAEGYLEILRMTLTTGADVNA, FNGTALIPASEHAHTEVVRMLIAAGVDLDH, and PGWTAMQEAIVLGNGGAGAQDVVRQLLAAGANPDI.

The protein localises to the cell membrane. This is Putative ankyrin-containing lipoprotein Lxx09580 from Leifsonia xyli subsp. xyli (strain CTCB07).